The sequence spans 418 residues: Serine hydroxymethyltransferase (418 aa).

(6S)-5,6,7,8-tetrahydrofolate contacts are provided by residues L120 and 124–126 (GHL). K229 bears the N6-(pyridoxal phosphate)lysine mark. 353–355 (SPF) lines the (6S)-5,6,7,8-tetrahydrofolate pocket.

This sequence belongs to the SHMT family. As to quaternary structure, homodimer. Pyridoxal 5'-phosphate is required as a cofactor.

Its subcellular location is the cytoplasm. It carries out the reaction (6R)-5,10-methylene-5,6,7,8-tetrahydrofolate + glycine + H2O = (6S)-5,6,7,8-tetrahydrofolate + L-serine. It participates in one-carbon metabolism; tetrahydrofolate interconversion. Its pathway is amino-acid biosynthesis; glycine biosynthesis; glycine from L-serine: step 1/1. Functionally, catalyzes the reversible interconversion of serine and glycine with tetrahydrofolate (THF) serving as the one-carbon carrier. This reaction serves as the major source of one-carbon groups required for the biosynthesis of purines, thymidylate, methionine, and other important biomolecules. Also exhibits THF-independent aldolase activity toward beta-hydroxyamino acids, producing glycine and aldehydes, via a retro-aldol mechanism. The polypeptide is Serine hydroxymethyltransferase (Psychrobacter arcticus (strain DSM 17307 / VKM B-2377 / 273-4)).